The primary structure comprises 130 residues: Small ribosomal subunit protein uS9 (130 aa).

This sequence belongs to the universal ribosomal protein uS9 family.

This Citrobacter koseri (strain ATCC BAA-895 / CDC 4225-83 / SGSC4696) protein is Small ribosomal subunit protein uS9.